A 255-amino-acid polypeptide reads, in one-letter code: Pimeloyl-[acyl-carrier protein] methyl ester esterase (255 aa).

In terms of domain architecture, AB hydrolase-1 spans 16–241 (LVLLHGWGLN…AAHAPFISHP (226 aa)). Residues W22, 81 to 82 (SL), and 142 to 146 (FLALQ) contribute to the substrate site. S81 acts as the Nucleophile in catalysis. Residues D206 and H234 contribute to the active site. H234 is a substrate binding site.

It belongs to the AB hydrolase superfamily. Carboxylesterase BioH family. In terms of assembly, monomer.

It is found in the cytoplasm. The enzyme catalyses 6-carboxyhexanoyl-[ACP] methyl ester + H2O = 6-carboxyhexanoyl-[ACP] + methanol + H(+). It functions in the pathway cofactor biosynthesis; biotin biosynthesis. Its function is as follows. The physiological role of BioH is to remove the methyl group introduced by BioC when the pimeloyl moiety is complete. It allows to synthesize pimeloyl-ACP via the fatty acid synthetic pathway through the hydrolysis of the ester bonds of pimeloyl-ACP esters. Also displays a weak thioesterase activity. Can form a complex with CoA, and may be involved in the condensation of CoA and pimelic acid into pimeloyl-CoA, a precursor in biotin biosynthesis. The polypeptide is Pimeloyl-[acyl-carrier protein] methyl ester esterase (Serratia marcescens).